The sequence spans 233 residues: uncharacterized protein (233 aa).

Belongs to the methyltransferase superfamily.

This is an uncharacterized protein from Bacillus subtilis (strain 168).